Reading from the N-terminus, the 226-residue chain is ATP synthase subunit a (226 aa).

The next 6 membrane-spanning stretches (helical) occupy residues 18-38 (FITG…SLGA), 76-96 (YFPL…IGII), 105-125 (SWSF…FEGI), 134-154 (FAHF…IEII), 179-199 (LIML…VLFF), and 201-221 (GILQ…GAVL).

This sequence belongs to the ATPase A chain family. In terms of assembly, F-type ATPases have 2 components, CF(1) - the catalytic core - and CF(0) - the membrane proton channel. CF(1) has five subunits: alpha(3), beta(3), gamma(1), delta(1), epsilon(1). CF(0) has three main subunits: a(1), b(2) and c(9-12). The alpha and beta chains form an alternating ring which encloses part of the gamma chain. CF(1) is attached to CF(0) by a central stalk formed by the gamma and epsilon chains, while a peripheral stalk is formed by the delta and b chains.

Its subcellular location is the cell inner membrane. Key component of the proton channel; it plays a direct role in the translocation of protons across the membrane. In Helicobacter acinonychis (strain Sheeba), this protein is ATP synthase subunit a.